A 32-amino-acid polypeptide reads, in one-letter code: Cytochrome b6-f complex subunit 7 (32 aa).

Residues 9–27 (AVLSSVLVLVGLAIGFLLL) traverse the membrane as a helical segment.

The protein belongs to the PetM family. The 4 large subunits of the cytochrome b6-f complex are cytochrome b6, subunit IV (17 kDa polypeptide, PetD), cytochrome f and the Rieske protein, while the 4 small subunits are PetG, PetL, PetM and PetN. The complex functions as a dimer.

Its subcellular location is the plastid. It is found in the chloroplast thylakoid membrane. In terms of biological role, component of the cytochrome b6-f complex, which mediates electron transfer between photosystem II (PSII) and photosystem I (PSI), cyclic electron flow around PSI, and state transitions. The polypeptide is Cytochrome b6-f complex subunit 7 (Pyropia yezoensis (Susabi-nori)).